Here is a 184-residue protein sequence, read N- to C-terminus: Ribosome-recycling factor (184 aa).

It belongs to the RRF family.

It localises to the cytoplasm. Functionally, responsible for the release of ribosomes from messenger RNA at the termination of protein biosynthesis. May increase the efficiency of translation by recycling ribosomes from one round of translation to another. The sequence is that of Ribosome-recycling factor from Psychrobacter sp. (strain PRwf-1).